A 244-amino-acid polypeptide reads, in one-letter code: INO80 complex subunit E (244 aa).

Residues 10–54 are a coiled coil; the sequence is DYKKKYRNLKRKLKFLIYEHECFQEELRKAQRKLLKVSRDKSFLL. Disordered stretches follow at residues 59–187 and 222–244; these read QYEN…PLTF and FSDA…DIPE. Low complexity-rich tracts occupy residues 99–115 and 122–136; these read PPLG…LPPS and ASRA…LASP. Over residues 157–171 the composition is skewed to basic residues; that stretch reads RPKREKRPRLPRKLK. Residues K159 and K171 each participate in a glycyl lysine isopeptide (Lys-Gly) (interchain with G-Cter in SUMO2) cross-link. The span at 230–244 shows a compositional bias: acidic residues; the sequence is DALDGDDDLVIDIPE.

In terms of assembly, component of the chromatin remodeling INO80 complex; specifically part of a complex module associated with the N-terminus of INO80.

Its subcellular location is the nucleus. Its function is as follows. Putative regulatory component of the chromatin remodeling INO80 complex which is involved in transcriptional regulation, DNA replication and probably DNA repair. The polypeptide is INO80 complex subunit E (INO80E) (Bos taurus (Bovine)).